The following is a 397-amino-acid chain: Class V chitinase CHIT5 (397 aa).

A signal peptide spans 1–18 (MIIKLLVALIHYLHETMA). One can recognise a GH18 domain in the interval 54 to 397 (GVRAAYWPAW…SKQASNAWGY (344 aa)). Residues Asn128 and Asn147 are each glycosylated (N-linked (GlcNAc...) asparagine). Glu166 acts as the Proton donor in catalysis. 4 N-linked (GlcNAc...) asparagine glycosylation sites follow: Asn193, Asn209, Asn247, and Asn261.

It belongs to the glycosyl hydrolase 18 family. Chitinase class V subfamily.

The catalysed reaction is Random endo-hydrolysis of N-acetyl-beta-D-glucosaminide (1-&gt;4)-beta-linkages in chitin and chitodextrins.. Its pathway is glycan degradation; chitin degradation. Its function is as follows. Possesses chitinase activity in vitro toward glycol chitin, carboxymethyl-chitin, colloidal chitin, and the chitin oligosaccharides (N-acetylglucosamine) (GlcNAc)6 and (GlcNAc)5. Hydrolyzes (GlcNAc)6 into (GlcNAc)4 and (GlcNAc)2, or two (GlcNAc)3 molecules. Has the capacity to inhibit hyphal growth of the fungus Trichoderma viride in an agar-plate bioassay. Involved in symbiotic signaling. Required for root hair infection threads (ITs) elongation and nodule development. Possesses Nod factor (NF) hydrolase activity. NFs are lipo-chitooligosaccharide signaling molecules produced by nitrogen-fixing rhizobia to initiate nodulation (symbiosis) on the roots of legumes. Modulates NF levels and signaling to complete transition of infected nodules to functional nitrogen-fixing organs. The protein is Class V chitinase CHIT5 of Lotus japonicus (Lotus corniculatus var. japonicus).